The chain runs to 590 residues: UvrABC system protein C (590 aa).

A GIY-YIG domain is found at 14 to 91; it reads DQPGCYLMKD…IKKYDPKYNV (78 aa). Residues 196 to 231 enclose the UVR domain; the sequence is NEVKKELEAKMLEASENLQFERAKEFRDQIAHIEST.

It belongs to the UvrC family. In terms of assembly, interacts with UvrB in an incision complex.

It localises to the cytoplasm. Functionally, the UvrABC repair system catalyzes the recognition and processing of DNA lesions. UvrC both incises the 5' and 3' sides of the lesion. The N-terminal half is responsible for the 3' incision and the C-terminal half is responsible for the 5' incision. The sequence is that of UvrABC system protein C from Bacillus licheniformis (strain ATCC 14580 / DSM 13 / JCM 2505 / CCUG 7422 / NBRC 12200 / NCIMB 9375 / NCTC 10341 / NRRL NRS-1264 / Gibson 46).